Consider the following 242-residue polypeptide: Haloacid dehalogenase-like hydrolase domain-containing protein 3 (242 aa).

Belongs to the HAD-like hydrolase superfamily.

This chain is Haloacid dehalogenase-like hydrolase domain-containing protein 3 (hdhd3), found in Danio rerio (Zebrafish).